We begin with the raw amino-acid sequence, 451 residues long: Phosphoglucosamine mutase (451 aa).

Residue serine 102 is the Phosphoserine intermediate of the active site. 4 residues coordinate Mg(2+): serine 102, aspartate 242, aspartate 244, and aspartate 246. At serine 102 the chain carries Phosphoserine.

It belongs to the phosphohexose mutase family. Mg(2+) serves as cofactor. Activated by phosphorylation.

The enzyme catalyses alpha-D-glucosamine 1-phosphate = D-glucosamine 6-phosphate. In terms of biological role, catalyzes the conversion of glucosamine-6-phosphate to glucosamine-1-phosphate. In Staphylococcus carnosus (strain TM300), this protein is Phosphoglucosamine mutase.